We begin with the raw amino-acid sequence, 307 residues long: Atrochrysone carboxyl ACP thioesterase (307 aa).

Zn(2+) contacts are provided by His-104, His-106, Asp-108, and His-109. Asp-108 serves as the catalytic Proton donor/acceptor.

It belongs to the metallo-beta-lactamase superfamily. Zn(2+) serves as cofactor.

It carries out the reaction atrochrysone carboxyl-[ACP] + H2O = atrochrysone carboxylate + holo-[ACP] + H(+). The protein operates within secondary metabolite biosynthesis. Functionally, atrochrysone carboxyl ACP thioesterase; part of the gene cluster that mediates the biosynthesis of monodictyphenone, a prenyl xanthone derivative. The pathway begins with the synthesis of atrochrysone thioester by the polyketide synthase (PKS) mdpG. The atrochrysone carboxyl ACP thioesterase mdpF then breaks the thioester bond and releases the atrochrysone carboxylic acid from mdpG. The atrochrysone carboxylic acid is then converted to atrochrysone which is further transformed into emodin anthrone. The next step is performed by the anthrone oxygenase mdpH that catalyzes the oxidation of emodinanthrone to emodin. Emodin is further modified to yield monodictyphenone via several steps involving mdpB, mdpC mdpJ, mdpK and mdpL. The short chain dehydrogenase mdpC converts the tautomers of emodin hydroquinone into the 3-hydroxy-3,4-dihydroan-thracen-1(2H)-one derivative. These enzymes with xptA, xptB and xptC are also proposed to be involved in the synthesis of shamixanthone from emodin. Especially, direct reduction of emodin by the short chain dehydrogenase mdpC followed by dehydration catalyzed by the scytalone dehydratase-like protein mdpB gives loss of oxygen and formation of chrysophanol intermediate in two simple steps. The protein is Atrochrysone carboxyl ACP thioesterase of Emericella nidulans (strain FGSC A4 / ATCC 38163 / CBS 112.46 / NRRL 194 / M139) (Aspergillus nidulans).